A 147-amino-acid polypeptide reads, in one-letter code: Transthyretin (147 aa).

Positions 1-20 are cleaved as a signal peptide; that stretch reads MASFRLFLLCLAGLVFVSEA. Cys30 carries the sulfocysteine modification. Residue Lys35 participates in L-thyroxine binding. Glu62 bears the 4-carboxyglutamate mark. Ser72 is modified (phosphoserine). Glu74 contributes to the L-thyroxine binding site. Asn118 carries N-linked (GlcNAc...) asparagine glycosylation. Residue Ser137 coordinates L-thyroxine.

Belongs to the transthyretin family. As to quaternary structure, homotetramer. Dimer of dimers. In the homotetramer, subunits assemble around a central channel that can accommodate two ligand molecules. Interacts with RBP4. Sulfonation of the reactive cysteine Cys-30 enhances the stability of the native conformation of TTR, avoiding misassembly of the protein leading to amyloid formation. In terms of tissue distribution, detected in serum (at protein level).

It is found in the secreted. Thyroid hormone-binding protein. Probably transports thyroxine from the bloodstream to the brain. This Bos taurus (Bovine) protein is Transthyretin (TTR).